Here is a 199-residue protein sequence, read N- to C-terminus: Recombination protein RecR (199 aa).

Residues 57 to 72 (CSSCRTFTEESLCPIC) form a C4-type zinc finger. A Toprim domain is found at 81 to 176 (DLICVVETPA…NVSRIAHGVP (96 aa)).

This sequence belongs to the RecR family.

May play a role in DNA repair. It seems to be involved in an RecBC-independent recombinational process of DNA repair. It may act with RecF and RecO. The protein is Recombination protein RecR of Shewanella loihica (strain ATCC BAA-1088 / PV-4).